The sequence spans 482 residues: MWRIPVIVALVAGLLYWVRKQGSQPSRKIPQPRIGLPVVGDAHAFGKSPISYIRQATARCGPVFQINLLLTKIVMLRGAQLNRFYLDTREEVWSFGDGMGLFLEKVVVPGYLSHLKEMVSSLNRGVIRSIALEHYTRIAGEEARKIATNWAEKPDIEVFEQMSRYTHRVIVRCLMGQDFYDHHLDELLDLLHRMEADIGHPFHFLLPNWVPHGPARRLHHARDRMAAIFNERLQAREQNPEKWQDSLDYIAYTLKDSRTAHLRQYFAAHHTLLMFAAHTSTVASIAWTVLELLRNPTHLEALKTALATDADIHRSPTLIATLKETSRRYSGVNMIRWARQPHQLPADAAPGKGNIVVPENCIVSISPYLTHHDPETYADPHIWDPTRWLEGGRLSETQKSNRSEVTYFPFGAGCHRCPGEQMAGMIAREMVAHMVKTYDVRWSSTGPPEDFEQLDFSRVGSAWLKGDARVTVKRDKQGMEEA.

Positions 1-22 (MWRIPVIVALVAGLLYWVRKQG) are cleaved as a signal peptide. Residue asparagine 401 is glycosylated (N-linked (GlcNAc...) asparagine). Cysteine 417 is a binding site for heme.

This sequence belongs to the cytochrome P450 family. Heme serves as cofactor.

Its pathway is secondary metabolite biosynthesis. Its function is as follows. Cytochrome P450 monooxygenase; part of the gene cluster that mediates the biosynthesis of pyranonigrins, a family of antioxidative compounds. The first step of pyranonigrins biosynthesis is performed by the hybrid PKS-NRPS synthetase that condenses 6 malonyl-CoA units to an acetyl starter unit, to form a 1,3,5-trioxotetradecane-6,8-dienyl-ACP. The enoyl reductase (ER) domain of pynA is likely to be functional during the first two rounds of polyketide chain extension, to generate the saturated C-C bonds of the alkyl side chain. PynA subsequently forms the amide bond between the acyl chain and L-serine. Although pynA has a terminal reductase domain, it appears to require the thioesterase pynI for the release of the straight-chain intermediate from pynA via the formation of a tetramic acid pyranonigrin J. The methyltransferase pynC then coverts pyranonigrin J to pyranonigrin I via N-methylation. The FAD-dependent monooxygenase pynG catalyzes an epoxidation-mediated cyclization to form the dihydro-gamma-pyrone moiety, followed by pynD-catalyzed oxidation of the alcohol to the ketone and enolization to yield the characteristic tetramic acid-fused gamma-pyrone core of pyranonigrin H. Pyranonigrin H is substrate of pynH for dehydration-mediated exo-methylene formation from the serine side chain to produce pyranonigrin E, before the oxidase pynE reduces the exo-methylene of pyranonigrin E into a pendant methyl to form pyranonigrin G. The FAD-linked oxidoreductase pynB performs the reverse reaction and converts pyranonigrin G back to pyranonigrin E. The chain is Cytochrome P450 monooxygenase pynD from Aspergillus niger (strain ATCC MYA-4892 / CBS 513.88 / FGSC A1513).